A 95-amino-acid polypeptide reads, in one-letter code: Co-chaperonin GroES (95 aa).

Residues 20–45 (KTKGGLIIPDSAKEKPAEGEITSVGE) form a disordered region.

Belongs to the GroES chaperonin family. In terms of assembly, heptamer of 7 subunits arranged in a ring. Interacts with the chaperonin GroEL.

It is found in the cytoplasm. Together with the chaperonin GroEL, plays an essential role in assisting protein folding. The GroEL-GroES system forms a nano-cage that allows encapsulation of the non-native substrate proteins and provides a physical environment optimized to promote and accelerate protein folding. GroES binds to the apical surface of the GroEL ring, thereby capping the opening of the GroEL channel. The sequence is that of Co-chaperonin GroES from Paracoccus denitrificans.